The primary structure comprises 75 residues: UPF0154 protein MYPE400 (75 aa).

Residues 5 to 27 form a helical membrane-spanning segment; it reads IGLCLGLGIPISLIIGAVIGYYF.

This sequence belongs to the UPF0154 family.

It is found in the membrane. In Malacoplasma penetrans (strain HF-2) (Mycoplasma penetrans), this protein is UPF0154 protein MYPE400.